The following is a 496-amino-acid chain: Glycerol kinase (496 aa).

Thr12 serves as a coordination point for ADP. 3 residues coordinate ATP: Thr12, Thr13, and Ser14. Thr12 lines the sn-glycerol 3-phosphate pocket. Arg16 lines the ADP pocket. Positions 82, 83, and 134 each coordinate sn-glycerol 3-phosphate. 3 residues coordinate glycerol: Arg82, Glu83, and Tyr134. His230 is subject to Phosphohistidine; by HPr. A sn-glycerol 3-phosphate-binding site is contributed by Asp244. Asp244 and Gln245 together coordinate glycerol. The ADP site is built by Thr266 and Gly309. ATP is bound by residues Thr266, Gly309, Gln313, and Gly410. Residues Gly410 and Asn414 each coordinate ADP.

This sequence belongs to the FGGY kinase family. As to quaternary structure, homotetramer and homodimer (in equilibrium). The phosphoenolpyruvate-dependent sugar phosphotransferase system (PTS), including enzyme I, and histidine-containing protein (HPr) are required for the phosphorylation, which leads to the activation of the enzyme.

It carries out the reaction glycerol + ATP = sn-glycerol 3-phosphate + ADP + H(+). Its pathway is polyol metabolism; glycerol degradation via glycerol kinase pathway; sn-glycerol 3-phosphate from glycerol: step 1/1. Activated by phosphorylation and inhibited by fructose 1,6-bisphosphate (FBP). Its function is as follows. Key enzyme in the regulation of glycerol uptake and metabolism. Catalyzes the phosphorylation of glycerol to yield sn-glycerol 3-phosphate. The sequence is that of Glycerol kinase from Bacillus licheniformis (strain ATCC 14580 / DSM 13 / JCM 2505 / CCUG 7422 / NBRC 12200 / NCIMB 9375 / NCTC 10341 / NRRL NRS-1264 / Gibson 46).